A 358-amino-acid polypeptide reads, in one-letter code: MTPTAASELLLSIESTCDETAAAVIRRDGTVLGQCIATQETLHEQFGGVVPEIAARAHLERILPVIDTALTQAKVRGEDLTAIAVADRPGLAGSLLVGVVAAKTLALAWNKPLISLNHLHAHLYACQLIEGAPANIYPAIGLIVSGGHTSLYVCRTAIDLEYLGGTIDDAAGEAFDKVAAMLSLPFPGGIEVAKLASQGNDKAYSFPRSMIHDPGDDFSFSGLKTAVRYAIVGPGRQDFASLDISDQVKRDVCASFEAAVVDVLVSKCRRAIKRHRNRNNDPQNSINRLIVGGGVAANQRLRRDLQAAADKDGFELWIAPPHLCTDNAVMGAIAWKKFEAEQFASLDLDITPGLQRGF.

Histidine 118 and histidine 122 together coordinate Fe cation. Substrate-binding positions include 143-147 (IVSGG), aspartate 176, glycine 189, and asparagine 298. Fe cation is bound at residue aspartate 326.

The protein belongs to the KAE1 / TsaD family. It depends on Fe(2+) as a cofactor.

Its subcellular location is the cytoplasm. It catalyses the reaction L-threonylcarbamoyladenylate + adenosine(37) in tRNA = N(6)-L-threonylcarbamoyladenosine(37) in tRNA + AMP + H(+). Its function is as follows. Required for the formation of a threonylcarbamoyl group on adenosine at position 37 (t(6)A37) in tRNAs that read codons beginning with adenine. Is involved in the transfer of the threonylcarbamoyl moiety of threonylcarbamoyl-AMP (TC-AMP) to the N6 group of A37, together with TsaE and TsaB. TsaD likely plays a direct catalytic role in this reaction. The chain is tRNA N6-adenosine threonylcarbamoyltransferase from Rhodopirellula baltica (strain DSM 10527 / NCIMB 13988 / SH1).